The chain runs to 445 residues: tRNA-2-methylthio-N(6)-dimethylallyladenosine synthase (445 aa).

Positions Lys-3–Arg-124 constitute an MTTase N-terminal domain. Residues Cys-12, Cys-48, Cys-87, Cys-162, Cys-166, and Cys-169 each contribute to the [4Fe-4S] cluster site. The Radical SAM core domain occupies Tyr-148–Ala-380. Positions Thr-383–Leu-445 constitute a TRAM domain.

The protein belongs to the methylthiotransferase family. MiaB subfamily. In terms of assembly, monomer. Requires [4Fe-4S] cluster as cofactor.

Its subcellular location is the cytoplasm. It carries out the reaction N(6)-dimethylallyladenosine(37) in tRNA + (sulfur carrier)-SH + AH2 + 2 S-adenosyl-L-methionine = 2-methylsulfanyl-N(6)-dimethylallyladenosine(37) in tRNA + (sulfur carrier)-H + 5'-deoxyadenosine + L-methionine + A + S-adenosyl-L-homocysteine + 2 H(+). In terms of biological role, catalyzes the methylthiolation of N6-(dimethylallyl)adenosine (i(6)A), leading to the formation of 2-methylthio-N6-(dimethylallyl)adenosine (ms(2)i(6)A) at position 37 in tRNAs that read codons beginning with uridine. This chain is tRNA-2-methylthio-N(6)-dimethylallyladenosine synthase, found in Rickettsia rickettsii (strain Iowa).